Here is a 525-residue protein sequence, read N- to C-terminus: Serine protease 1 (525 aa).

Residues 1 to 32 (MKCKKPSALFSALALVGALGAASVLGAASANS) form the signal peptide. A propeptide spanning residues 33-211 (ASPVAAATVQ…TVSDDVIVPV (179 aa)) is cleaved from the precursor. The cysteines at positions 223 and 239 are disulfide-linked. Catalysis depends on charge relay system residues His-238 and Asp-270. Intrachain disulfides connect Cys-310/Cys-320, Cys-346/Cys-376, Cys-412/Cys-431, Cys-453/Cys-472, and Cys-496/Cys-514. The active-site Charge relay system is the Ser-352. Residues 396–525 (TSTDVTTSYV…GGANQKWWRR (130 aa)) enclose the Ricin B-type lectin domain. The tract at residues 401–525 (TTSYVQGYQN…GGANQKWWRR (125 aa)) is essential for the lytic activity, but not for protease function.

The protein belongs to the peptidase S1 family.

The protein localises to the secreted. In terms of biological role, major serine protease exhibiting lytic activity toward living yeast cells. Similar to elastase in its substrate specificity and has a lectin-like affinity for mannose. Mannoproteins may be the native substrate for RPI. The protein is Serine protease 1 of Rarobacter faecitabidus.